A 96-amino-acid polypeptide reads, in one-letter code: Cytochrome c-553 (96 aa).

Positions 1-19 (MKKVIMALGVLAFANALMA) are cleaved as a signal peptide. Heme c is bound by residues Cys29, Cys32, His33, and Met73.

The protein belongs to the cytochrome c family. In terms of processing, binds 1 heme c group covalently per subunit.

Its subcellular location is the periplasm. Its function is as follows. Natural electron acceptor for a formate dehydrogenase. The chain is Cytochrome c-553 from Helicobacter pylori (strain ATCC 700392 / 26695) (Campylobacter pylori).